A 37-amino-acid chain; its full sequence is Large ribosomal subunit protein bL36 (37 aa).

The protein belongs to the bacterial ribosomal protein bL36 family.

This is Large ribosomal subunit protein bL36 from Cyanothece sp. (strain PCC 7425 / ATCC 29141).